The chain runs to 651 residues: Peptide-N(4)-(N-acetyl-beta-glucosaminyl)asparagine amidase (651 aa).

The residue at position 2 (alanine 2) is an N-acetylalanine. One can recognise a PUB domain in the interval 30 to 91; sequence EASKLLLTYA…EGETHLIFPK (62 aa). Cysteine 247, cysteine 250, cysteine 280, and cysteine 283 together coordinate Zn(2+). Catalysis depends on cysteine 306, which acts as the Nucleophile. Catalysis depends on residues histidine 333 and aspartate 350. Positions 451–651 constitute a PAW domain; the sequence is ELGGRVSGSL…LEIIITFNDL (201 aa).

The protein belongs to the transglutaminase-like superfamily. PNGase family. Component of a complex required to couple retrotranslocation, ubiquitination and deglycosylation composed of NGLY1, SAKS1, AMFR, VCP and RAD23B. Interacts with the proteasome components RAD23B and PSMC1. Interacts with directly with VCP. Interacts with DERL1, bringing it close to the endoplasmic reticulum membrane. Interacts with SAKS1. Zn(2+) serves as cofactor. In terms of tissue distribution, ubiquitously expressed with highest level in testis.

It is found in the cytoplasm. It carries out the reaction Hydrolysis of an N(4)-(acetyl-beta-D-glucosaminyl)asparagine residue in which the glucosamine residue may be further glycosylated, to yield a (substituted) N-acetyl-beta-D-glucosaminylamine and a peptide containing an aspartate residue.. With respect to regulation, inhibited by Z-VAD-fmk, a well-known caspase inhibitor, which inhibits enzyme activity through covalent binding of the carbohydrate to the single Cys-306 residue. Functionally, specifically deglycosylates the denatured form of N-linked glycoproteins in the cytoplasm and assists their proteasome-mediated degradation. Cleaves the beta-aspartyl-glucosamine (GlcNAc) of the glycan and the amide side chain of Asn, converting Asn to Asp. Prefers proteins containing high-mannose over those bearing complex type oligosaccharides. Can recognize misfolded proteins in the endoplasmic reticulum that are exported to the cytosol to be destroyed and deglycosylate them, while it has no activity toward native proteins. Deglycosylation is a prerequisite for subsequent proteasome-mediated degradation of some, but not all, misfolded glycoproteins. This chain is Peptide-N(4)-(N-acetyl-beta-glucosaminyl)asparagine amidase (Ngly1), found in Mus musculus (Mouse).